The primary structure comprises 92 residues: Small ribosomal subunit protein uS19c (92 aa).

Belongs to the universal ribosomal protein uS19 family.

The protein resides in the plastid. Its subcellular location is the chloroplast. Protein S19 forms a complex with S13 that binds strongly to the 16S ribosomal RNA. The protein is Small ribosomal subunit protein uS19c of Illicium oligandrum (Star anise).